Consider the following 465-residue polypeptide: ATP synthase subunit beta (465 aa).

149 to 156 (GGAGVGKT) lines the ATP pocket.

Belongs to the ATPase alpha/beta chains family. F-type ATPases have 2 components, CF(1) - the catalytic core - and CF(0) - the membrane proton channel. CF(1) has five subunits: alpha(3), beta(3), gamma(1), delta(1), epsilon(1). CF(0) has three main subunits: a(1), b(2) and c(9-12). The alpha and beta chains form an alternating ring which encloses part of the gamma chain. CF(1) is attached to CF(0) by a central stalk formed by the gamma and epsilon chains, while a peripheral stalk is formed by the delta and b chains.

Its subcellular location is the cell inner membrane. It catalyses the reaction ATP + H2O + 4 H(+)(in) = ADP + phosphate + 5 H(+)(out). Functionally, produces ATP from ADP in the presence of a proton gradient across the membrane. The catalytic sites are hosted primarily by the beta subunits. This is ATP synthase subunit beta from Dictyoglomus turgidum (strain DSM 6724 / Z-1310).